A 102-amino-acid chain; its full sequence is Large ribosomal subunit protein bL28 (102 aa).

The segment covering 1 to 20 has biased composition (polar residues); it reads MSNSCDLTGHGWQNGNMVSH. A disordered region spans residues 1–27; the sequence is MSNSCDLTGHGWQNGNMVSHSNRKTKK.

Belongs to the bacterial ribosomal protein bL28 family.

The chain is Large ribosomal subunit protein bL28 from Neorickettsia sennetsu (strain ATCC VR-367 / Miyayama) (Ehrlichia sennetsu).